A 728-amino-acid chain; its full sequence is Phosphoribosylformylglycinamidine synthase subunit PurL (728 aa).

H42 is a catalytic residue. Residues Y45 and K84 each coordinate ATP. Mg(2+) is bound at residue E86. Residues 87 to 90 and R109 contribute to the substrate site; that span reads SHNH. H88 (proton acceptor) is an active-site residue. Residue D110 participates in Mg(2+) binding. A substrate-binding site is contributed by Q237. D265 is a binding site for Mg(2+). Substrate is bound at residue 309–311; the sequence is ESQ. 2 residues coordinate ATP: D491 and G528. Mg(2+) is bound at residue N529. S531 is a substrate binding site.

Belongs to the FGAMS family. Monomer. Part of the FGAM synthase complex composed of 1 PurL, 1 PurQ and 2 PurS subunits.

It is found in the cytoplasm. It catalyses the reaction N(2)-formyl-N(1)-(5-phospho-beta-D-ribosyl)glycinamide + L-glutamine + ATP + H2O = 2-formamido-N(1)-(5-O-phospho-beta-D-ribosyl)acetamidine + L-glutamate + ADP + phosphate + H(+). It functions in the pathway purine metabolism; IMP biosynthesis via de novo pathway; 5-amino-1-(5-phospho-D-ribosyl)imidazole from N(2)-formyl-N(1)-(5-phospho-D-ribosyl)glycinamide: step 1/2. Its function is as follows. Part of the phosphoribosylformylglycinamidine synthase complex involved in the purines biosynthetic pathway. Catalyzes the ATP-dependent conversion of formylglycinamide ribonucleotide (FGAR) and glutamine to yield formylglycinamidine ribonucleotide (FGAM) and glutamate. The FGAM synthase complex is composed of three subunits. PurQ produces an ammonia molecule by converting glutamine to glutamate. PurL transfers the ammonia molecule to FGAR to form FGAM in an ATP-dependent manner. PurS interacts with PurQ and PurL and is thought to assist in the transfer of the ammonia molecule from PurQ to PurL. This is Phosphoribosylformylglycinamidine synthase subunit PurL from Campylobacter jejuni subsp. jejuni serotype O:2 (strain ATCC 700819 / NCTC 11168).